Reading from the N-terminus, the 436-residue chain is uncharacterized protein (436 aa).

Positions 1-19 are cleaved as a signal peptide; sequence MKKLLLASIIGLASTTSFA.

This is an uncharacterized protein from Rickettsia bellii (strain RML369-C).